The chain runs to 132 residues: Small ribosomal subunit protein uS8 (132 aa).

The protein belongs to the universal ribosomal protein uS8 family. In terms of assembly, part of the 30S ribosomal subunit. Contacts proteins S5 and S12.

Functionally, one of the primary rRNA binding proteins, it binds directly to 16S rRNA central domain where it helps coordinate assembly of the platform of the 30S subunit. The chain is Small ribosomal subunit protein uS8 from Mesorhizobium japonicum (strain LMG 29417 / CECT 9101 / MAFF 303099) (Mesorhizobium loti (strain MAFF 303099)).